We begin with the raw amino-acid sequence, 429 residues long: Enolase (429 aa).

Glutamine 163 serves as a coordination point for (2R)-2-phosphoglycerate. Glutamate 205 acts as the Proton donor in catalysis. Mg(2+) contacts are provided by aspartate 242, glutamate 287, and aspartate 314. (2R)-2-phosphoglycerate contacts are provided by lysine 339, arginine 368, serine 369, and lysine 390. Lysine 339 acts as the Proton acceptor in catalysis.

Belongs to the enolase family. The cofactor is Mg(2+).

Its subcellular location is the cytoplasm. It is found in the secreted. It localises to the cell surface. The catalysed reaction is (2R)-2-phosphoglycerate = phosphoenolpyruvate + H2O. The protein operates within carbohydrate degradation; glycolysis; pyruvate from D-glyceraldehyde 3-phosphate: step 4/5. Functionally, catalyzes the reversible conversion of 2-phosphoglycerate (2-PG) into phosphoenolpyruvate (PEP). It is essential for the degradation of carbohydrates via glycolysis. The sequence is that of Enolase from Cupriavidus pinatubonensis (strain JMP 134 / LMG 1197) (Cupriavidus necator (strain JMP 134)).